A 29-amino-acid chain; its full sequence is Augerpeptide hheTx2 (29 aa).

In terms of processing, contains 4 disulfide bonds. In terms of tissue distribution, expressed by the venom duct.

It is found in the secreted. The polypeptide is Augerpeptide hheTx2 (Hastula hectica (Sea snail)).